A 249-amino-acid chain; its full sequence is MQLLCYFVILFVGIAPWSSLANDDGCNEVVCGSVVSKCLITQSCQCKLNDCHCCKDCLNCLGELYIECCGCLDMCPKHKDVLPSLTPRSEIGDIEGVPELFDTLTAEDDEGWSTIRFSMRAGFKQRVQGGASGDAGNGNGNGNAGSAGVTLCTVIYVNSCIRANKCRQQCESMGASSYRWFHDGCCECVGENCLNYGINESRCRGCPEDQDQLLTADTVPAEAEQDLERFFGNEEIEDEWGYGEEDEFS.

The signal sequence occupies residues Met1–Asp23. A glycan (N-linked (GlcNAc...) asparagine) is linked at Asn199.

This sequence belongs to the twisted gastrulation protein family. Component of a complex composed of dpp, sog and tsg. As to expression, first appears in stage 4 embryos, expressed in two domains: a broad mid-dorsal saddle and an anterior cap, expression between the domains is continuous across the dorsal midline. At stage 5, expression is refined into 4 graded stripes in the mid-dorsal region and a paired domain in the anterior region. During stages 7 and 8, anterior expression fades and the mid dorsal stripes are located between the anterior and posterior transverse furrow (ATF and PTF). Expressing cells become incorporated into the deepening PTF.

It localises to the secreted. In terms of biological role, involved in dorsal-ventral patterning. Required for specification of a narrow strip of dorsal midline cells that will give rise to the amnioserosa, but not for specification of dorsal ectoderm cells. Inhibits BMP signaling; enhances the binding of sog to dpp, thus enhancing the antagonistic activity of sog. The sequence is that of Protein twisted gastrulation (tsg) from Drosophila melanogaster (Fruit fly).